Reading from the N-terminus, the 709-residue chain is Probable serine/threonine-protein kinase zyg-1 (709 aa).

The Protein kinase domain occupies 13-251 (FQNLQQIGQG…LKEIVMTDYV (239 aa)). Residues 19-27 (IGQGGFGVV) and Lys-41 each bind ATP. Catalysis depends on Asp-130, which acts as the Proton acceptor. 2 disordered regions span residues 254 to 329 (KMGE…DRAR) and 591 to 633 (SSSQ…PAAT). Basic and acidic residues-rich tracts occupy residues 262–291 (SREH…ERRP) and 302–313 (SRRDPDGYRAAH). The span at 607-627 (PLSSRTTSSLNVRNGVSSDEN) shows a compositional bias: polar residues.

The protein belongs to the protein kinase superfamily. Ser/Thr protein kinase family.

The protein localises to the cytoplasm. Its subcellular location is the cytoskeleton. The protein resides in the microtubule organizing center. It is found in the centrosome. It localises to the centriole. It carries out the reaction L-seryl-[protein] + ATP = O-phospho-L-seryl-[protein] + ADP + H(+). The catalysed reaction is L-threonyl-[protein] + ATP = O-phospho-L-threonyl-[protein] + ADP + H(+). Protein kinase that plays a central role in centrosome duplication. Paternal copy is required to regulate synthesis of daughter centrioles prior to fertilization. Maternal copy regulates centrosome duplication during later cell cycles. Functions upstream of sas-5 and sas-6, and is required for their localization to the centrosome. This is Probable serine/threonine-protein kinase zyg-1 (zyg-1) from Caenorhabditis briggsae.